A 1160-amino-acid polypeptide reads, in one-letter code: Transcription factor tau 138 kDa subunit (1160 aa).

A disordered region spans residues 475–533 (PNSKKTPNKNKRKRQVKNSTNASVAGNISNPKRIKLEQHVSTAQEPKSAEDSPSSNGGT). The span at 480–490 (TPNKNKRKRQV) shows a compositional bias: basic residues. Polar residues-rich tracts occupy residues 491–504 (KNST…NISN) and 513–529 (HVST…SPSS). S546 bears the Phosphoserine mark.

In terms of assembly, component of the TFIIIC complex composed of TFC1, TFC3, TFC4, TFC6, TFC7 and TFC8. The subunits are organized in two globular domains, tauA and tauB, connected by a proteolysis-sensitive and flexible linker. Interacts with TFC1, TFC4 and TFC6.

It is found in the nucleus. The protein localises to the mitochondrion. TFIIIC mediates tRNA and 5S RNA gene activation by binding to intragenic promoter elements. Upstream of the transcription start site, TFIIIC assembles the initiation complex TFIIIB-TFIIIC-tDNA, which is sufficient for RNA polymerase III recruitment and function. Part of the tauB domain of TFIIIC that binds boxB DNA promoter sites of tRNA and similar genes. TFC3 is essential for cell viability. Cooperates with TFC6 in DNA binding. The polypeptide is Transcription factor tau 138 kDa subunit (TFC3) (Saccharomyces cerevisiae (strain ATCC 204508 / S288c) (Baker's yeast)).